An 869-amino-acid polypeptide reads, in one-letter code: DNA mismatch repair protein MutS (869 aa).

An ATP-binding site is contributed by Gly619–Ser626.

Belongs to the DNA mismatch repair MutS family.

This protein is involved in the repair of mismatches in DNA. It is possible that it carries out the mismatch recognition step. This protein has a weak ATPase activity. In Caldanaerobacter subterraneus subsp. tengcongensis (strain DSM 15242 / JCM 11007 / NBRC 100824 / MB4) (Thermoanaerobacter tengcongensis), this protein is DNA mismatch repair protein MutS.